We begin with the raw amino-acid sequence, 111 residues long: uncharacterized protein (111 aa).

Residues 1–18 (MGKSMEEGIFVKVFPSKA) form the signal peptide.

This is an uncharacterized protein from Acidianus convivator (ATV).